We begin with the raw amino-acid sequence, 85 residues long: Cell division topological specificity factor (85 aa).

Belongs to the MinE family.

Prevents the cell division inhibition by proteins MinC and MinD at internal division sites while permitting inhibition at polar sites. This ensures cell division at the proper site by restricting the formation of a division septum at the midpoint of the long axis of the cell. This Xanthomonas euvesicatoria pv. vesicatoria (strain 85-10) (Xanthomonas campestris pv. vesicatoria) protein is Cell division topological specificity factor.